Consider the following 416-residue polypeptide: MFSAKDTLAKVDPELWQAIQAEVQRQEDHIELIASENYVSKAVMEAQGSQLTNKYAEGYPGKRYYGGCEYVDVAEQIAIDRLKKLFGAEAANVQPNSGSQANQAVLMAFAKPGDTIMGMSLAEGGHLTHGMALNMSGKWFNVVSYGLNEKEEIDYDKMEALAREHKPKIIVAGASAYALRIDWERFAKIAKEVGAIFWVDMAHYAGLIAAGFYPNPVPFADVVTSTTHKTLRGPRGGVILMKAEHEKALNSAIFPGLQGGPLEHVIAAKAVAFKEAATPEFKNYQEQVINNARVMARVLGEERGLRIVSGRTESHVFLLDLRAKNITGKDAEAALGRAHITVNKNGIPNDPQKPFVTSGIRIGSPAMTTRGFTEIEAEQIAHLVADVLEAPSDEAVAATVREKVSALCKKFPVYGA.

(6S)-5,6,7,8-tetrahydrofolate is bound by residues Leu121 and 125-127 (GHL). Lys229 carries the post-translational modification N6-(pyridoxal phosphate)lysine.

The protein belongs to the SHMT family. In terms of assembly, homodimer. Requires pyridoxal 5'-phosphate as cofactor.

It localises to the cytoplasm. The catalysed reaction is (6R)-5,10-methylene-5,6,7,8-tetrahydrofolate + glycine + H2O = (6S)-5,6,7,8-tetrahydrofolate + L-serine. It functions in the pathway one-carbon metabolism; tetrahydrofolate interconversion. The protein operates within amino-acid biosynthesis; glycine biosynthesis; glycine from L-serine: step 1/1. Functionally, catalyzes the reversible interconversion of serine and glycine with tetrahydrofolate (THF) serving as the one-carbon carrier. This reaction serves as the major source of one-carbon groups required for the biosynthesis of purines, thymidylate, methionine, and other important biomolecules. Also exhibits THF-independent aldolase activity toward beta-hydroxyamino acids, producing glycine and aldehydes, via a retro-aldol mechanism. This Dechloromonas aromatica (strain RCB) protein is Serine hydroxymethyltransferase.